A 402-amino-acid chain; its full sequence is Deoxyguanosinetriphosphate triphosphohydrolase-like protein (402 aa).

The 145-residue stretch at 73–217 (RLTHTIEVAQ…AAIADDIAYN (145 aa)) folds into the HD domain.

The protein belongs to the dGTPase family. Type 2 subfamily.

This chain is Deoxyguanosinetriphosphate triphosphohydrolase-like protein, found in Brucella suis (strain ATCC 23445 / NCTC 10510).